The following is a 174-amino-acid chain: Flavodoxin (174 aa).

In terms of domain architecture, Flavodoxin-like spans 4–165; the sequence is VGLFYGSDTG…RVEKWCKQIY (162 aa).

Belongs to the flavodoxin family. Requires FMN as cofactor.

Functionally, low-potential electron donor to a number of redox enzymes. This chain is Flavodoxin (fldA), found in Haemophilus influenzae (strain ATCC 51907 / DSM 11121 / KW20 / Rd).